We begin with the raw amino-acid sequence, 518 residues long: Protein nucleotidyltransferase YdiU (518 aa).

Residues glycine 109, glycine 111, arginine 112, lysine 131, aspartate 143, glycine 144, arginine 194, and arginine 201 each coordinate ATP. The active-site Proton acceptor is the aspartate 270. Positions 271 and 280 each coordinate Mg(2+). Residue aspartate 280 participates in ATP binding.

The protein belongs to the SELO family. It depends on Mg(2+) as a cofactor. Mn(2+) is required as a cofactor.

It carries out the reaction L-seryl-[protein] + ATP = 3-O-(5'-adenylyl)-L-seryl-[protein] + diphosphate. It catalyses the reaction L-threonyl-[protein] + ATP = 3-O-(5'-adenylyl)-L-threonyl-[protein] + diphosphate. The catalysed reaction is L-tyrosyl-[protein] + ATP = O-(5'-adenylyl)-L-tyrosyl-[protein] + diphosphate. The enzyme catalyses L-histidyl-[protein] + UTP = N(tele)-(5'-uridylyl)-L-histidyl-[protein] + diphosphate. It carries out the reaction L-seryl-[protein] + UTP = O-(5'-uridylyl)-L-seryl-[protein] + diphosphate. It catalyses the reaction L-tyrosyl-[protein] + UTP = O-(5'-uridylyl)-L-tyrosyl-[protein] + diphosphate. In terms of biological role, nucleotidyltransferase involved in the post-translational modification of proteins. It can catalyze the addition of adenosine monophosphate (AMP) or uridine monophosphate (UMP) to a protein, resulting in modifications known as AMPylation and UMPylation. In Paraburkholderia xenovorans (strain LB400), this protein is Protein nucleotidyltransferase YdiU.